The primary structure comprises 761 residues: Ribonucleoside-diphosphate reductase subunit alpha (761 aa).

The region spanning 5 to 95 (LFVTKRNGKI…IFHLRKKAFG (91 aa)) is the ATP-cone domain. Residues lysine 9, 15-21 (ELINLDK), threonine 55, and lysine 91 contribute to the ATP site. Threonine 209 contacts GDP. A disulfide bridge links cysteine 225 with cysteine 462. DTTP-binding positions include 232-234 (DNL), arginine 262, and arginine 269. Asparagine 437 provides a ligand contact to GDP. Asparagine 437 (proton acceptor) is an active-site residue. Cysteine 439 functions as the Cysteine radical intermediate in the catalytic mechanism. GDP is bound by residues glutamate 441 and 623 to 625 (ETS). The active-site Proton acceptor is glutamate 441.

It belongs to the ribonucleoside diphosphate reductase large chain family. In terms of assembly, tetramer of two alpha and two beta subunits.

The enzyme catalyses a 2'-deoxyribonucleoside 5'-diphosphate + [thioredoxin]-disulfide + H2O = a ribonucleoside 5'-diphosphate + [thioredoxin]-dithiol. Its activity is regulated as follows. Under complex allosteric control mediated by deoxynucleoside triphosphates and ATP binding to separate specificity and activation sites on the alpha subunit. The type of nucleotide bound at the specificity site determines substrate preference. It seems probable that ATP makes the enzyme reduce CDP and UDP, dGTP favors ADP reduction and dTTP favors GDP reduction. Stimulated by ATP and inhibited by dATP binding to the activity site. Provides the precursors necessary for DNA synthesis. Catalyzes the biosynthesis of deoxyribonucleotides from the corresponding ribonucleotides. This Buchnera aphidicola subsp. Baizongia pistaciae (strain Bp) protein is Ribonucleoside-diphosphate reductase subunit alpha (nrdA).